A 275-amino-acid polypeptide reads, in one-letter code: NH(3)-dependent NAD(+) synthetase (275 aa).

46-53 (GISGGQDS) provides a ligand contact to ATP. Asp-52 contributes to the Mg(2+) binding site. Arg-140 contacts deamido-NAD(+). Thr-160 lines the ATP pocket. Glu-165 contributes to the Mg(2+) binding site. Residues Lys-173 and Asp-180 each coordinate deamido-NAD(+). ATP-binding residues include Lys-189 and Thr-211. 260 to 261 (HK) serves as a coordination point for deamido-NAD(+).

It belongs to the NAD synthetase family. In terms of assembly, homodimer.

It carries out the reaction deamido-NAD(+) + NH4(+) + ATP = AMP + diphosphate + NAD(+) + H(+). It functions in the pathway cofactor biosynthesis; NAD(+) biosynthesis; NAD(+) from deamido-NAD(+) (ammonia route): step 1/1. In terms of biological role, catalyzes the ATP-dependent amidation of deamido-NAD to form NAD. Uses ammonia as a nitrogen source. In Escherichia coli O127:H6 (strain E2348/69 / EPEC), this protein is NH(3)-dependent NAD(+) synthetase.